Here is a 470-residue protein sequence, read N- to C-terminus: Nuclear receptor subfamily 0 group B member 1 (470 aa).

Tandem repeats lie at residues 1–67 (MAGE…YRCC), 68–133 (FCGK…YRCC), and 134–200 (FCGE…YRCC). Positions 1–253 (MAGENHQWQG…RPVALKNPQV (253 aa)) are 4 X 67 AA tandem repeats. 3 short sequence motifs (LXXLL motif) span residues 13-17 (LYNML), 80-84 (LYSML), and 146-150 (LYSLL). The stretch at 201–253 (FCGEDHPQQGSTLYCMPTSTNQAQAAPEERPRAPWWDTSSGALRPVALKNPQV) is one 4; truncated repeat. Residues 205–469 (DHPQQGSTLY…DMMLEMLCTK (265 aa)) form the NR LBD domain. The short motif at 461 to 466 (MMLEML) is the AF-2 motif element.

The protein belongs to the nuclear hormone receptor family. NR0 subfamily. Homodimer. Interacts with NR5A1, NR5A2, NR0B2 and with COPS2. Interacts with ESRRB; represses ESRRB activity at the GATA6 promoter.

It localises to the nucleus. The protein localises to the cytoplasm. Functionally, nuclear receptor that lacks a DNA-binding domain and acts as a corepressor that inhibits the transcriptional activity of other nuclear receptors through heterodimeric interactions. Component of a cascade required for the development of the hypothalamic-pituitary-adrenal-gonadal axis. May also have a role in the development of the embryo and in the maintenance of embryonic stem cell pluripotency. The protein is Nuclear receptor subfamily 0 group B member 1 (NR0B1) of Macaca mulatta (Rhesus macaque).